The primary structure comprises 143 residues: Ribonuclease P protein component (143 aa).

The disordered stretch occupies residues 111 to 143 (RVKRKGGGPGGNRRSAPPGSAPLTDDGRLRGEP).

This sequence belongs to the RnpA family. As to quaternary structure, consists of a catalytic RNA component (M1 or rnpB) and a protein subunit.

It catalyses the reaction Endonucleolytic cleavage of RNA, removing 5'-extranucleotides from tRNA precursor.. In terms of biological role, RNaseP catalyzes the removal of the 5'-leader sequence from pre-tRNA to produce the mature 5'-terminus. It can also cleave other RNA substrates such as 4.5S RNA. The protein component plays an auxiliary but essential role in vivo by binding to the 5'-leader sequence and broadening the substrate specificity of the ribozyme. The polypeptide is Ribonuclease P protein component (Deinococcus geothermalis (strain DSM 11300 / CIP 105573 / AG-3a)).